The chain runs to 274 residues: Diaminopimelate epimerase (274 aa).

The substrate site is built by asparagine 11 and asparagine 76. Cysteine 85 serves as the catalytic Proton donor. Substrate contacts are provided by residues 86-87 (GN), asparagine 157, asparagine 189, and 207-208 (ER). Cysteine 216 serves as the catalytic Proton acceptor. 217 to 218 (GT) contacts substrate.

It belongs to the diaminopimelate epimerase family. In terms of assembly, homodimer.

The protein resides in the cytoplasm. It carries out the reaction (2S,6S)-2,6-diaminopimelate = meso-2,6-diaminopimelate. Its pathway is amino-acid biosynthesis; L-lysine biosynthesis via DAP pathway; DL-2,6-diaminopimelate from LL-2,6-diaminopimelate: step 1/1. Functionally, catalyzes the stereoinversion of LL-2,6-diaminopimelate (L,L-DAP) to meso-diaminopimelate (meso-DAP), a precursor of L-lysine and an essential component of the bacterial peptidoglycan. The chain is Diaminopimelate epimerase from Thermobifida fusca (strain YX).